Reading from the N-terminus, the 1191-residue chain is DNA-directed RNA polymerase subunit beta (1191 aa).

Positions 1171 to 1181 (RVKQEAEEKQA) are enriched in basic and acidic residues. The segment at 1171-1191 (RVKQEAEEKQAEQVSEVVQED) is disordered. The span at 1182–1191 (EQVSEVVQED) shows a compositional bias: low complexity.

Belongs to the RNA polymerase beta chain family. As to quaternary structure, the RNAP catalytic core consists of 2 alpha, 1 beta, 1 beta' and 1 omega subunit. When a sigma factor is associated with the core the holoenzyme is formed, which can initiate transcription.

It carries out the reaction RNA(n) + a ribonucleoside 5'-triphosphate = RNA(n+1) + diphosphate. Functionally, DNA-dependent RNA polymerase catalyzes the transcription of DNA into RNA using the four ribonucleoside triphosphates as substrates. This Streptococcus agalactiae serotype Ia (strain ATCC 27591 / A909 / CDC SS700) protein is DNA-directed RNA polymerase subunit beta.